Here is a 218-residue protein sequence, read N- to C-terminus: uncharacterized protein (218 aa).

Helical transmembrane passes span 27–49, 57–77, 115–135, 142–162, and 180–200; these read IALE…GFLA, GGVL…GYWV, VFFG…AGIV, FLLY…SLAY, and FSWF…VFHF.

This sequence belongs to the DedA family.

The protein resides in the cell membrane. This is an uncharacterized protein from Synechocystis sp. (strain ATCC 27184 / PCC 6803 / Kazusa).